A 253-amino-acid chain; its full sequence is Low affinity immunoglobulin gamma Fc region receptor III-B (253 aa).

The signal sequence occupies residues 1 to 20 (MGQPLPPVALLLLVSASSRA). Residues 21-207 (ADVPKALVLL…VSSSVLPWHQ (187 aa)) are Extracellular-facing. Ig-like C2-type domains follow at residues 24–105 (PKAL…LRVH) and 120–189 (EGEP…VTIT). Intrachain disulfides connect C47-C89 and C128-C172. N56, N63, N165, and N180 each carry an N-linked (GlcNAc...) asparagine glycan. A helical membrane pass occupies residues 208-226 (IAFCLVMGLLLAADTGLYF). Residues 227-253 (SVQRDLRSSQRARKEHTLGWSLGSQDK) lie on the Cytoplasmic side of the membrane.

In terms of assembly, forms a heterooligomeric complex with ITAM-containing signaling subunits FCER1G. Interacts (via transmembrane domain) with signaling subunits; this interaction is a prerequisite for receptor complex expression on the cell surface and intracellular signal transduction. Binds the Fc region of antigen-complexed IgG.

The protein resides in the cell membrane. Receptor for the invariable Fc fragment of immunoglobulin gamma (IgG). Optimally activated upon binding of clustered antigen-IgG complexes displayed on cell surfaces, triggers lysis of antibody-coated cells, a process known as antibody-dependent cellular cytotoxicity (ADCC). Does not bind free monomeric IgG, thus avoiding inappropriate effector cell activation in the absence of antigenic trigger. Mediates IgG effector functions on natural killer (NK) cells. Binds antigen-IgG complexes generated upon infection and triggers NK cell-dependent cytokine production and degranulation to limit viral load and propagation. Fc-binding subunit that associates with FCER1G adapters to form functional signaling complexes. Following the engagement of antigen-IgG complexes, triggers phosphorylation of immunoreceptor tyrosine-based activation motif (ITAM)-containing adapters with subsequent activation of phosphatidylinositol 3-kinase signaling and sustained elevation of intracellular calcium that ultimately drive NK cell activation. Mediates enhanced ADCC in response to afucosylated IgGs. This is Low affinity immunoglobulin gamma Fc region receptor III-B (FCGR3B) from Oryctolagus cuniculus (Rabbit).